We begin with the raw amino-acid sequence, 309 residues long: Ankyrin repeat protein VACWR203 (309 aa).

ANK repeat units lie at residues 13–44, 110–142, 160–189, 197–231, and 269–298; these read SVFK…SLTI, KYGT…DINA, FVYH…DLTI, PVVY…RASH, and EGRT…DIVV.

It belongs to the orthopoxviruses VACWR203 protein family.

The chain is Ankyrin repeat protein VACWR203 from Bos taurus (Bovine).